Consider the following 472-residue polypeptide: WD repeat-containing protein 88 (472 aa).

Residues 1–22 form a disordered region; that stretch reads MASPPRCSPTAHDRECKLPPPS. WD repeat units follow at residues 100 to 139, 143 to 182, 184 to 224, 228 to 267, 271 to 310, 319 to 358, and 361 to 400; these read GHEH…VVRD, RPKA…LLWK, RYDT…TVSV, HHTR…TLLT, AHSN…FRNC, GHEG…RKLS, and GHND…EIPL. The segment at 447–472 is disordered; sequence LPADTSSSSSSSERENSPPPRGSKDD. A compositionally biased stretch (basic and acidic residues) spans 458-472; sequence SERENSPPPRGSKDD.

The sequence is that of WD repeat-containing protein 88 (WDR88) from Homo sapiens (Human).